Reading from the N-terminus, the 190-residue chain is Peptidoglycan recognition protein 1 (190 aa).

An N-terminal signal peptide occupies residues Met1–Ala21. Gln22 carries the post-translational modification Pyrrolidone carboxylic acid. Disulfide bonds link Cys24–Cys148, Cys40–Cys85, and Cys61–Cys67. Residues Gln46 to Gly174 enclose the N-acetylmuramoyl-L-alanine amidase domain.

Belongs to the N-acetylmuramoyl-L-alanine amidase 2 family. Homodimer; disulfide-linked.

Its subcellular location is the secreted. The protein localises to the cytoplasmic granule. In terms of biological role, innate immunity protein that plays several important functions in antimicrobial and antitumor defense systems. Acts as a pattern receptor that binds to murein peptidoglycans (PGN) of Gram-positive bacteria and thus provides bactericidal activity. Forms an equimolar complex with heat shock protein HSPA1A and induces programmed cell death through apoptosis and necroptosis in tumor cell lines by activating the TNFR1 receptor on the target cell membrane. In addition, acts in complex with the Ca(2+)-binding protein S100A4 as a chemoattractant able to induce lymphocyte movement. Mechanistically, this complex acts as a ligand of the chemotactic receptors CCR5 and CXCR3 which are present on the cells of the immune system. Promotes also the activation of lymphocytes that become able to kill virus-infected cells as well as tumor cells by modulating the spectrum of their target-cell specificity. Induction of cytotoxicity on monocyte surface requires interaction with TREM1 receptor. The sequence is that of Peptidoglycan recognition protein 1 (PGLYRP1) from Bos indicus (Zebu).